The chain runs to 918 residues: Serine/threonine-protein kinase D1 (918 aa).

A Phosphotyrosine modification is found at tyrosine 93. Residues 144–194 (PHALFVHSYRAPAFCDHCGEMLWGLVRQGLKCEGCGLNYHKRCAFKIPNNC) form a Phorbol-ester/DAG-type 1 zinc finger. Phosphoserine occurs at positions 203, 206, 217, and 221. A Phorbol-ester/DAG-type 2 zinc finger spans residues 276-326 (PHTFVIHSYTRPTVCQFCKKLLKGLFRQGLQCKDCRFNCHKRCAPKVPNNC). Disordered stretches follow at residues 338–362 (SPGAESDVVMEEGSDDNDSERNSGL) and 379–410 (AEGQSGGAEMQDPDADQEDSNRTISPSTSNNI). Over residues 345 to 355 (VVMEEGSDDND) the composition is skewed to acidic residues. The residue at position 351 (serine 351) is a Phosphoserine. Over residues 400–410 (RTISPSTSNNI) the composition is skewed to polar residues. Residues serine 403 and serine 407 each carry the phosphoserine; by MAPK13 modification. One can recognise a PH domain in the interval 428–547 (TVMKEGWMVH…WEVAIQHALM (120 aa)). The residue at position 438 (tyrosine 438) is a Phosphotyrosine. Serine 454 carries the phosphoserine modification. Residue tyrosine 469 is modified to Phosphotyrosine; by ABL. Tyrosine 508 carries the post-translational modification Phosphotyrosine. Serine 554 bears the Phosphoserine mark. A Protein kinase domain is found at 589–845 (IFPDEVLGSG…VDKTLSHPWL (257 aa)). ATP is bound by residues 595–603 (LGSGQFGIV) and lysine 618. Aspartate 712 serves as the catalytic Proton acceptor. Serine 744 carries the post-translational modification Phosphoserine; by PKC/PRKCD. Residue serine 748 is modified to Phosphoserine; by autocatalysis and PKC/PRKCD. Tyrosine 755 carries the phosphotyrosine modification. Serine 916 is subject to Phosphoserine; by autocatalysis.

It belongs to the protein kinase superfamily. CAMK Ser/Thr protein kinase family. PKD subfamily. In terms of assembly, interacts (via N-terminus) with ADAP1/CENTA1. Interacts with MAPK13. Interacts with DAPK1 in an oxidative stress-regulated manner. Interacts with USP28; the interaction induces phosphorylation of USP28 and activated KRAS-mediated stabilization of ZNF304. Interacts with AKAP13 (via C-terminal domain). Mg(2+) serves as cofactor. Post-translationally, phosphorylated at Ser-403 and Ser-407 by MAPK13 during regulation of insulin secretion in pancreatic beta cells. Phosphorylated by DAPK1. Phosphorylated at Tyr-93 and by ABL at Tyr-469, which primes the kinase in response to oxidative stress, and promotes a second step activating phosphorylation at Ser-744/Ser-748 by PKRD. Phosphorylated at Ser-916 upon S.enterica infection in macrophages.

The protein resides in the cytoplasm. It localises to the cell membrane. It is found in the golgi apparatus. The protein localises to the trans-Golgi network. It carries out the reaction L-seryl-[protein] + ATP = O-phospho-L-seryl-[protein] + ADP + H(+). The catalysed reaction is L-threonyl-[protein] + ATP = O-phospho-L-threonyl-[protein] + ADP + H(+). With respect to regulation, activated by DAG and phorbol esters. Phorbol-ester/DAG-type domain 1 binds DAG with high affinity and appears to play the dominant role in mediating translocation to the cell membrane and trans-Golgi network. Phorbol-ester/DAG-type domain 2 binds phorbol ester with higher affinity. Autophosphorylation of Ser-748 and phosphorylation of Ser-744 by PKC relieves auto-inhibition by the PH domain. Phosphorylation on Tyr-469 by the SRC-ABL1 pathway in response to oxidative stress, is also required for activation. Activated by DAPK1 under oxidative stress. Serine/threonine-protein kinase that converts transient diacylglycerol (DAG) signals into prolonged physiological effects downstream of PKC, and is involved in the regulation of MAPK8/JNK1 and Ras signaling, Golgi membrane integrity and trafficking, cell survival through NF-kappa-B activation, cell migration, cell differentiation by mediating HDAC7 nuclear export, cell proliferation via MAPK1/3 (ERK1/2) signaling, and plays a role in cardiac hypertrophy, VEGFA-induced angiogenesis, genotoxic-induced apoptosis and flagellin-stimulated inflammatory response. Phosphorylates the epidermal growth factor receptor (EGFR) on dual threonine residues, which leads to the suppression of epidermal growth factor (EGF)-induced MAPK8/JNK1 activation and subsequent JUN phosphorylation. Phosphorylates RIN1, inducing RIN1 binding to 14-3-3 proteins YWHAB, YWHAE and YWHAZ and increased competition with RAF1 for binding to GTP-bound form of Ras proteins (NRAS, HRAS and KRAS). Acts downstream of the heterotrimeric G-protein beta/gamma-subunit complex to maintain the structural integrity of the Golgi membranes, and is required for protein transport along the secretory pathway. In the trans-Golgi network (TGN), regulates the fission of transport vesicles that are on their way to the plasma membrane. May act by activating the lipid kinase phosphatidylinositol 4-kinase beta (PI4KB) at the TGN for the local synthesis of phosphorylated inositol lipids, which induces a sequential production of DAG, phosphatidic acid (PA) and lyso-PA (LPA) that are necessary for membrane fission and generation of specific transport carriers to the cell surface. Under oxidative stress, is phosphorylated at Tyr-469 via SRC-ABL1 and contributes to cell survival by activating IKK complex and subsequent nuclear translocation and activation of NFKB1. Involved in cell migration by regulating integrin alpha-5/beta-3 recycling and promoting its recruitment in newly forming focal adhesion. In osteoblast differentiation, mediates the bone morphogenetic protein 2 (BMP2)-induced nuclear export of HDAC7, which results in the inhibition of HDAC7 transcriptional repression of RUNX2. In neurons, plays an important role in neuronal polarity by regulating the biogenesis of TGN-derived dendritic vesicles, and is involved in the maintenance of dendritic arborization and Golgi structure in hippocampal cells. May potentiate mitogenesis induced by the neuropeptide bombesin or vasopressin by mediating an increase in the duration of MAPK1/3 (ERK1/2) signaling, which leads to accumulation of immediate-early gene products including FOS that stimulate cell cycle progression. Plays an important role in the proliferative response induced by low calcium in keratinocytes, through sustained activation of MAPK1/3 (ERK1/2) pathway. Downstream of novel PKC signaling, plays a role in cardiac hypertrophy by phosphorylating HDAC5, which in turn triggers XPO1/CRM1-dependent nuclear export of HDAC5, MEF2A transcriptional activation and induction of downstream target genes that promote myocyte hypertrophy and pathological cardiac remodeling. Mediates cardiac troponin I (TNNI3) phosphorylation at the PKA sites, which results in reduced myofilament calcium sensitivity, and accelerated crossbridge cycling kinetics. The PRKD1-HDAC5 pathway is also involved in angiogenesis by mediating VEGFA-induced specific subset of gene expression, cell migration, and tube formation. In response to VEGFA, is necessary and required for HDAC7 phosphorylation which induces HDAC7 nuclear export and endothelial cell proliferation and migration. During apoptosis induced by cytarabine and other genotoxic agents, PRKD1 is cleaved by caspase-3 at Asp-378, resulting in activation of its kinase function and increased sensitivity of cells to the cytotoxic effects of genotoxic agents. In epithelial cells, is required for transducing flagellin-stimulated inflammatory responses by binding and phosphorylating TLR5, which contributes to MAPK14/p38 activation and production of inflammatory cytokines. Acts as an activator of NLRP3 inflammasome assembly by mediating phosphorylation of NLRP3. May play a role in inflammatory response by mediating activation of NF-kappa-B. May be involved in pain transmission by directly modulating TRPV1 receptor. Plays a role in activated KRAS-mediated stabilization of ZNF304 in colorectal cancer (CRC) cells. Regulates nuclear translocation of transcription factor TFEB in macrophages upon live S.enterica infection. The polypeptide is Serine/threonine-protein kinase D1 (Prkd1) (Mus musculus (Mouse)).